Reading from the N-terminus, the 426-residue chain is MEKIFKILANLKFAIALLLLISITITFGSIIEQDQTLDYYKQNYPLTNPIGGFLTWKVINMFQLNHIYKNFWFISLLLSLGISLIACTFFQQFPGIKFSRRCYFSNNPRKTDFQTQLKTNLSRNIIYTIISEGYFVFQQKKNFYGTKGIIGRIAPVFVHLSIILILLGSIFASLGGFNSQELIGKGEIFHIQNVTSSGPLTKLSQQAIRVNDFWINYYPNNKIKQFYSNLSIINGDGQEVRSKTISVNKPLIYKDLTFYQTDWNLLGLRISHNNKNFQIPVIQTTQNLNKVWLTWLPLESNTSKNLSGETIIINNYKGTIYIYDNNGQLNKKIELSNFIENKNYKLIEFLSVTGIQIKSDPGILFIYFGFGFLMVSTILSYLSFSQVWLGIDYLEQNNIKLTVNAKTNRTKVLLTTQMYKITKNKR.

3 helical membrane-spanning segments follow: residues 11–31 (LKFAIALLLLISITITFGSII), 70–90 (NFWFISLLLSLGISLIACTFF), and 153–173 (IAPVFVHLSIILILLGSIFAS).

It belongs to the Ccs1/CcsB family. As to quaternary structure, may interact with CcsA.

The protein localises to the plastid. Its subcellular location is the chloroplast thylakoid membrane. Functionally, required during biogenesis of c-type cytochromes (cytochrome c6 and cytochrome f) at the step of heme attachment. The sequence is that of Cytochrome c biogenesis protein Ccs1 from Heterosigma akashiwo (strain CCMP452 / OLISTH).